The following is a 79-amino-acid chain: Defensin-1 (79 aa).

An N-terminal signal peptide occupies residues 1 to 23 (MKFLNVVAIALLVVACLAVYSNA). Intrachain disulfides connect C42/C69, C55/C75, and C59/C77.

It belongs to the invertebrate defensin family. Type 1 subfamily.

The protein resides in the secreted. This chain is Defensin-1 (SMD1), found in Stomoxys calcitrans (Stable fly).